Here is a 347-residue protein sequence, read N- to C-terminus: Glycerol-3-phosphate dehydrogenase [NAD(P)+] (347 aa).

W20, R39, and K118 together coordinate NADPH. Residues K118, G152, and S154 each coordinate sn-glycerol 3-phosphate. Residue A156 participates in NADPH binding. Positions 207, 260, 270, 271, and 272 each coordinate sn-glycerol 3-phosphate. K207 functions as the Proton acceptor in the catalytic mechanism. NADPH is bound at residue R271. The NADPH site is built by V295 and E297.

This sequence belongs to the NAD-dependent glycerol-3-phosphate dehydrogenase family.

The protein resides in the cytoplasm. It carries out the reaction sn-glycerol 3-phosphate + NAD(+) = dihydroxyacetone phosphate + NADH + H(+). The catalysed reaction is sn-glycerol 3-phosphate + NADP(+) = dihydroxyacetone phosphate + NADPH + H(+). Its pathway is membrane lipid metabolism; glycerophospholipid metabolism. Its function is as follows. Catalyzes the reduction of the glycolytic intermediate dihydroxyacetone phosphate (DHAP) to sn-glycerol 3-phosphate (G3P), the key precursor for phospholipid synthesis. This chain is Glycerol-3-phosphate dehydrogenase [NAD(P)+], found in Cupriavidus pinatubonensis (strain JMP 134 / LMG 1197) (Cupriavidus necator (strain JMP 134)).